The primary structure comprises 953 residues: E3 ubiquitin-protein ligase ZNF598 (953 aa).

A compositionally biased stretch (basic residues) spans 25-39; the sequence is KPSKSTRIKPTKPHH. Positions 25-47 are disordered; it reads KPSKSTRIKPTKPHHTPSNSMES. The segment at 57-97 adopts an RING-type zinc-finger fold; that stretch reads CVLCCQDIDLFAVGKCDHPVCYRCSTKMRVLCEQKYCAVCR. The C2H2-type zinc-finger motif lies at 215 to 238; it reads PLCKFCDDRYLDNDELLKHLRRDH. 2 disordered regions span residues 299-779 and 884-911; these read SKNR…EDSS and EKQQ…SSLD. A compositionally biased stretch (low complexity) spans 371 to 380; sequence AAAMRASMAS. A compositionally biased stretch (basic and acidic residues) spans 381-409; it reads HQEERSHAQERSMLKPRREEKLEPDETRN. Polar residues-rich tracts occupy residues 410-431 and 467-483; these read NRST…NGSL and LSGS…YTNQ. S489 carries the post-translational modification Phosphoserine. Composition is skewed to low complexity over residues 508-518 and 536-553; these read QSSAASAWSQA and MTPM…PLPS. Polar residues-rich tracts occupy residues 555-564 and 641-650; these read SVPQPLTASS and LGSPSHTPET. Over residues 655–666 the composition is skewed to basic and acidic residues; that stretch reads AHKENVPEKKPP. The span at 695–711 shows a compositional bias: polar residues; sequence SCTSFPENITSSKQPVT. Pro residues predominate over residues 747–765; it reads LPPPPPPGLGPAVSKPPPG. Over residues 770–779 the composition is skewed to polar residues; that stretch reads PLNSNVEDSS.

The protein belongs to the ZNF598/HEL2 family.

It is found in the cytoplasm. The protein localises to the cytosol. It carries out the reaction S-ubiquitinyl-[E2 ubiquitin-conjugating enzyme]-L-cysteine + [acceptor protein]-L-lysine = [E2 ubiquitin-conjugating enzyme]-L-cysteine + N(6)-ubiquitinyl-[acceptor protein]-L-lysine.. It functions in the pathway protein modification; protein ubiquitination. Its function is as follows. E3 ubiquitin-protein ligase that plays a key role in the ribosome quality control (RQC), a pathway that takes place when a ribosome has stalled during translation, leading to degradation of nascent peptide chains. ZNF598 is activated when ribosomes are stalled within an mRNA following translation of prematurely polyadenylated mRNAs. Acts as a ribosome collision sensor: specifically recognizes and binds collided di-ribosome, which arises when a trailing ribosome encounters a slower leading ribosome, leading to terminally arrest translation. Following binding to colliding ribosomes, mediates monoubiquitination of 40S ribosomal proteins RPS10/eS10 and RPS3/uS3, and 'Lys-63'-linked polyubiquitination of RPS20/uS10. Polyubiquitination of RPS20/uS10 promotes recruitment of the RQT (ribosome quality control trigger) complex, which drives the disassembly of stalled ribosomes, followed by degradation of nascent peptides. The chain is E3 ubiquitin-protein ligase ZNF598 from Danio rerio (Zebrafish).